The chain runs to 353 residues: Putative glycosyltransferase TagX (353 aa).

It belongs to the glycosyltransferase 2 family.

This chain is Putative glycosyltransferase TagX (tagX), found in Staphylococcus aureus (strain Mu50 / ATCC 700699).